The sequence spans 382 residues: GDP-mannose 4,6 dehydratase 2 (382 aa).

NADP(+) contacts are provided by residues Gly40–Asp45, Asp97–Met98, Leu119–Ser123, and Tyr134. Residue Thr166 is part of the active site. Catalysis depends on nucleophile residues Glu168 and Tyr190. NADP(+) is bound by residues Lys194, His220, and Arg225.

This sequence belongs to the NAD(P)-dependent epimerase/dehydratase family. GDP-mannose 4,6-dehydratase subfamily. NADP(+) serves as cofactor.

The enzyme catalyses GDP-alpha-D-mannose = GDP-4-dehydro-alpha-D-rhamnose + H2O. Its pathway is nucleotide-sugar biosynthesis; GDP-L-fucose biosynthesis via de novo pathway; GDP-L-fucose from GDP-alpha-D-mannose: step 1/2. Catalyzes the conversion of GDP-D-mannose to GDP-4-dehydro-6-deoxy-D-mannose. This chain is GDP-mannose 4,6 dehydratase 2 (gmd-2), found in Caenorhabditis elegans.